The primary structure comprises 291 residues: Geranyl diphosphate 2-C-methyltransferase (291 aa).

It belongs to the geranyl diphosphate 2-C-methyltransferase family. The cofactor is Mg(2+).

The enzyme catalyses (2E)-geranyl diphosphate + S-adenosyl-L-methionine = (E)-2-methylgeranyl diphosphate + S-adenosyl-L-homocysteine + H(+). Catalyzes the SAM-dependent methylation of geranyl diphosphate (GPP) to yield (E)-2-methylgeranyl diphosphate (2-MeGPP). The chain is Geranyl diphosphate 2-C-methyltransferase from Streptomyces ambofaciens (strain ATCC 23877 / 3486 / DSM 40053 / JCM 4204 / NBRC 12836 / NRRL B-2516).